The following is a 430-amino-acid chain: UDP-N-acetylmuramoylalanine--D-glutamate ligase (430 aa).

105–111 (GSNGKTT) is a binding site for ATP.

It belongs to the MurCDEF family.

It is found in the cytoplasm. It catalyses the reaction UDP-N-acetyl-alpha-D-muramoyl-L-alanine + D-glutamate + ATP = UDP-N-acetyl-alpha-D-muramoyl-L-alanyl-D-glutamate + ADP + phosphate + H(+). Its pathway is cell wall biogenesis; peptidoglycan biosynthesis. Functionally, cell wall formation. Catalyzes the addition of glutamate to the nucleotide precursor UDP-N-acetylmuramoyl-L-alanine (UMA). The sequence is that of UDP-N-acetylmuramoylalanine--D-glutamate ligase from Pseudothermotoga lettingae (strain ATCC BAA-301 / DSM 14385 / NBRC 107922 / TMO) (Thermotoga lettingae).